A 394-amino-acid chain; its full sequence is Acetyl-CoA acetyltransferase (394 aa).

The active-site Acyl-thioester intermediate is the Cys-89. Residues His-350 and Cys-380 each act as proton acceptor in the active site.

This sequence belongs to the thiolase-like superfamily. Thiolase family. In terms of assembly, homotetramer.

The protein resides in the cytoplasm. The enzyme catalyses 2 acetyl-CoA = acetoacetyl-CoA + CoA. It participates in biopolymer metabolism; poly-(R)-3-hydroxybutanoate biosynthesis. It functions in the pathway metabolic intermediate biosynthesis; (R)-mevalonate biosynthesis; (R)-mevalonate from acetyl-CoA: step 1/3. The protein is Acetyl-CoA acetyltransferase of Allochromatium vinosum (strain ATCC 17899 / DSM 180 / NBRC 103801 / NCIMB 10441 / D) (Chromatium vinosum).